The sequence spans 67 residues: MNKRYKLYRVWYYYAHQTVCITSTGFALCFVVQAKTAGLGVTPITSLYGDKKEHLGKLLVPLVLYQI.

Residues Y12–A34 form a helical membrane-spanning segment.

Its subcellular location is the membrane. This is an uncharacterized protein from Saccharomyces cerevisiae (strain ATCC 204508 / S288c) (Baker's yeast).